Reading from the N-terminus, the 290-residue chain is Cilia- and flagella-associated protein 298 (290 aa).

It belongs to the CFAP298 family. As to quaternary structure, interacts with ZMYND10. As to expression, expressed in the trachea (at protein level).

It localises to the cytoplasm. The protein resides in the cytoskeleton. Its subcellular location is the cilium basal body. In terms of biological role, plays a role in motile cilium function, possibly by acting on outer dynein arm assembly. Seems to be important for initiation rather than maintenance of cilium motility. Required for correct positioning of cilia at the apical cell surface, suggesting an additional role in the planar cell polarity (PCP) pathway. May suppress canonical Wnt signaling activity. The chain is Cilia- and flagella-associated protein 298 from Rattus norvegicus (Rat).